The following is a 451-amino-acid chain: Tubulin alpha-1B chain (451 aa).

The MREC motif motif lies at 1-4; the sequence is MREC. Positions 10, 11, 12, and 15 each coordinate GTP. Lys-40 bears the N6,N6,N6-trimethyllysine; alternate mark. Lys-40 is modified (N6-acetyllysine; alternate). Phosphoserine is present on Ser-48. Residues Glu-71, Ala-99, Ser-140, Gly-143, Gly-144, Thr-145, Gly-146, Thr-179, Glu-183, Asn-206, Tyr-224, and Asn-228 each contribute to the GTP site. Glu-71 contributes to the Mg(2+) binding site. Ser-232 is modified (phosphoserine). GTP is bound at residue Leu-252. The active site involves Glu-254. Tyr-282 is modified (3'-nitrotyrosine). A Glycyl lysine isopeptide (Lys-Gly) (interchain with G-Cter in ubiquitin) cross-link involves residue Lys-326. Arg-339 carries the post-translational modification Omega-N-methylarginine. Residue Lys-370 forms a Glycyl lysine isopeptide (Lys-Gly) (interchain with G-Cter in ubiquitin) linkage. Ser-439 bears the Phosphoserine mark. Glu-443 and Glu-445 each carry 5-glutamyl polyglutamate. Tyr-451 is subject to 3'-nitrotyrosine.

The protein belongs to the tubulin family. As to quaternary structure, heterodimer of alpha- and beta-tubulin. A typical microtubule is a hollow water-filled tube with an outer diameter of 25 nm and an inner diameter of 15 nM. Alpha-beta heterodimers associate head-to-tail to form protofilaments running lengthwise along the microtubule wall with the beta-tubulin subunit facing the microtubule plus end conferring a structural polarity. Microtubules usually have 13 protofilaments but different protofilament numbers can be found in some organisms and specialized cells. Interacts with gamma-tubulin; the interaction allows microtubules to nucleate from the gamma-tubulin ring complex (gTuRC). Nascent microtubule interacts (via alpha-tubulin MREC motif) with TTC5/STRAP; this interaction may result in tubulin mRNA-targeted degradation. Component of sperm flagellar doublet microtubules. The cofactor is Mg(2+). In terms of processing, some glutamate residues at the C-terminus are polyglycylated, resulting in polyglycine chains on the gamma-carboxyl group. Glycylation is mainly limited to tubulin incorporated into axonemes (cilia and flagella) whereas glutamylation is prevalent in neuronal cells, centrioles, axonemes, and the mitotic spindle. Both modifications can coexist on the same protein on adjacent residues, and lowering polyglycylation levels increases polyglutamylation, and reciprocally. Cilia and flagella glycylation is required for their stability and maintenance. Flagella glycylation controls sperm motility. Post-translationally, some glutamate residues at the C-terminus are polyglutamylated, resulting in polyglutamate chains on the gamma-carboxyl group. Polyglutamylation plays a key role in microtubule severing by spastin (SPAST). SPAST preferentially recognizes and acts on microtubules decorated with short polyglutamate tails: severing activity by SPAST increases as the number of glutamates per tubulin rises from one to eight, but decreases beyond this glutamylation threshold. Glutamylation is also involved in cilia motility. Acetylation of alpha chains at Lys-40 is located inside the microtubule lumen. This modification has been correlated with increased microtubule stability, intracellular transport and ciliary assembly. In terms of processing, methylation of alpha chains at Lys-40 is found in mitotic microtubules and is required for normal mitosis and cytokinesis contributing to genomic stability. Post-translationally, nitration of Tyr-451 is irreversible and interferes with normal dynein intracellular distribution. Undergoes a tyrosination/detyrosination cycle, the cyclic removal and re-addition of a C-terminal tyrosine residue by the enzymes tubulin tyrosine carboxypeptidase (MATCAP1, VASH1 or VASH2) and tubulin tyrosine ligase (TTL), respectively. In terms of processing, tyrosination promotes microtubule interaction with CAP-Gly domain-containing proteins such as CLIP1, CLIP2 and DCTN1. Tyrosination regulates the initiation of dynein-dynactin motility via interaction with DCTN1, which brings the dynein-dynactin complex into contact with microtubules. In neurons, tyrosinated tubulins mediate the initiation of retrograde vesicle transport. Post-translationally, detyrosination is involved in metaphase plate congression by guiding chromosomes during mitosis: detyrosination promotes interaction with CENPE, promoting pole-proximal transport of chromosomes toward the equator. Detyrosination increases microtubules-dependent mechanotransduction in dystrophic cardiac and skeletal muscle. In cardiomyocytes, detyrosinated microtubules are required to resist to contractile compression during contraction: detyrosination promotes association with desmin (DES) at force-generating sarcomeres, leading to buckled microtubules and mechanical resistance to contraction.

It localises to the cytoplasm. The protein localises to the cytoskeleton. The enzyme catalyses GTP + H2O = GDP + phosphate + H(+). Tubulin is the major constituent of microtubules, protein filaments consisting of alpha- and beta-tubulin heterodimers. Microtubules grow by the addition of GTP-tubulin dimers to the microtubule end, where a stabilizing cap forms. Below the cap, tubulin dimers are in GDP-bound state, owing to GTPase activity of alpha-tubulin. The sequence is that of Tubulin alpha-1B chain (TUBA1B) from Pan troglodytes (Chimpanzee).